A 40-amino-acid chain; its full sequence is Alpha-conotoxin-like Qc1.1c (40 aa).

The propeptide occupies Ser-1–Arg-19. 2 cysteine pairs are disulfide-bonded: Cys-22–Cys-28 and Cys-23–Cys-36. Residues Pro-24–Pro-26 are lacks the Ser-Xaa-Pro motif that is crucial for potent interaction with nAChR.

The protein belongs to the conotoxin A superfamily. Expressed by the venom duct.

The protein localises to the secreted. Its function is as follows. Alpha-conotoxins act on postsynaptic membranes, they bind to the nicotinic acetylcholine receptors (nAChR) and thus inhibit them. Has possibly a distinct nAChR binding mode from other alpha-conotoxins, due to a different three residue motif (lacks the Ser-Xaa-Pro motif). The sequence is that of Alpha-conotoxin-like Qc1.1c from Conus quercinus (Oak cone).